Reading from the N-terminus, the 839-residue chain is Genome polyprotein (839 aa).

The span at 55–66 (TAEVGSHQSEPL) shows a compositional bias: polar residues. A disordered region spans residues 55-76 (TAEVGSHQSEPLKTSVDKPGSK). 2 consecutive short sequence motifs ((L)YPX(n)L motif) follow at residues 167–171 (YPHGL) and 200–205 (YPVWEL). Polar residues predominate over residues 496–510 (SGGFSTTVSTEQNVP). Disordered stretches follow at residues 496–530 (SGGFSTTVSTEQNVPDPQVGITTPKDLKGKANKGK) and 773–792 (GDLESSVDDPRTDEDRRFES). The interval 766 to 836 (MLDRIAGGDL…RKLKGLFSQS (71 aa)) is involved in P1-2A pentamerization. The segment covering 780-792 (DDPRTDEDRRFES) has biased composition (basic and acidic residues).

It belongs to the picornaviridae polyprotein family. Homodimer. Homomultimer; probably interacts with membranes in a multimeric form. Seems to assemble into amyloid-like fibers. In terms of assembly, homopentamer. Homooligomer. As to quaternary structure, interacts with capsid protein VP2. Interacts with capsid protein VP3. Interacts with capsid protein VP1. Interacts with capsid protein VP3. In terms of assembly, interacts with capsid protein VP1. Interacts with capsid protein VP2. In terms of processing, specific enzymatic cleavages by viral protease in vivo yield a variety of precursors and mature proteins. Polyprotein processing intermediates are produced, such as P1-2A which is a functional precursor of the structural proteins, VP0 which is a VP4-VP2 precursor, VP1-2A precursor, 3ABC precursor which is a stable and catalytically active precursor of 3A, 3B and 3C proteins, 3AB and 3CD precursors. The assembly signal 2A is removed from VP1-2A by a host protease, possibly host Cathepsin L. This cleavage occurs over a region of 3 amino-acids probably generating VP1 proteins with heterogeneous C-termini. Post-translationally, during virion maturation, immature virions are rendered infectious following cleavage of VP0 into VP4 and VP2. This maturation seems to be an autocatalytic event triggered by the presence of RNA in the capsid and is followed by a conformational change of the particle. The assembly signal 2A is removed from VP1-2A by a host protease, possibly host Cathepsin L in naked virions. This cleavage does not occur in enveloped virions. This cleavage occurs over a region of 3 amino-acids probably generating VP1 proteins with heterogeneous C-termini. In terms of processing, unlike other picornaviruses, does not seem to be myristoylated.

The protein resides in the virion. It localises to the host endosome. Its subcellular location is the host multivesicular body. It is found in the host membrane. In terms of biological role, capsid proteins VP1, VP2, and VP3 form a closed capsid enclosing the viral positive strand RNA genome. All these proteins contain a beta-sheet structure called beta-barrel jelly roll. Together they form an icosahedral capsid (T=3) composed of 60 copies of each VP1, VP2, and VP3, with a diameter of approximately 300 Angstroms. VP1 is situated at the 12 fivefold axes, whereas VP2 and VP3 are located at the quasi-sixfold axes. The naked capsid interacts with the host receptor HAVCR1 to provide virion attachment to and probably entry into the target cell. Functionally, VP0 precursor is a component of the immature procapsids. Plays a role in the assembly of the 12 pentamers into an icosahedral structure. Has not been detected in mature virions, supposedly owing to its small size. Its function is as follows. Precursor component of immature procapsids that corresponds to an extended form of the structural protein VP1. After maturation, possibly by the host Cathepsin L, the assembly signal 2A is cleaved to give rise to the mature VP1 protein. In terms of biological role, affects membrane integrity and causes an increase in membrane permeability. Functionally, functions as a viroporin. Affects membrane integrity and causes an increase in membrane permeability. Involved in host intracellular membrane rearrangements probably to give rise to the viral factories. Does not disrupt calcium homeostasis or glycoprotein trafficking. Antagonizes the innate immune response of the host by suppressing IFN-beta synthesis, which it achieves by interfering with the RIG-I/IFIH1 pathway. The polypeptide is Genome polyprotein (Callithrix (Owl-faced monkey)).